We begin with the raw amino-acid sequence, 513 residues long: Alanine--glyoxylate aminotransferase 2, mitochondrial (513 aa).

A mitochondrion-targeting transit peptide spans 1–40; it reads MSLAWRNLQKPFYLETSLRILQMRPSLSLGASRIAVPKLT. Lysine 56 bears the N6-acetyllysine mark. An N6-acetyllysine; alternate modification is found at lysine 70. Lysine 70 carries the N6-succinyllysine; alternate modification. The residue at position 83 (lysine 83) is an N6-acetyllysine. Residue lysine 261 is modified to N6-acetyllysine; alternate. Lysine 261 carries the N6-succinyllysine; alternate modification. Lysine 303 is modified (N6-succinyllysine). Lysine 349 carries the N6-(pyridoxal phosphate)lysine modification. 2 positions are modified to N6-acetyllysine; alternate: lysine 416 and lysine 419. Lysine 416 and lysine 419 each carry N6-succinyllysine; alternate. Lysine 453 carries the post-translational modification N6-acetyllysine.

The protein belongs to the class-III pyridoxal-phosphate-dependent aminotransferase family. As to quaternary structure, homotetramer. It depends on pyridoxal 5'-phosphate as a cofactor. In terms of tissue distribution, expressed in the liver and kidney.

The protein localises to the mitochondrion. It carries out the reaction glyoxylate + L-alanine = glycine + pyruvate. It catalyses the reaction (R)-3-amino-2-methylpropanoate + pyruvate = 2-methyl-3-oxopropanoate + L-alanine. The catalysed reaction is 3-oxopropanoate + L-alanine = beta-alanine + pyruvate. The enzyme catalyses 2-oxobutanoate + L-alanine = (2S)-2-aminobutanoate + pyruvate. It carries out the reaction N(omega),N(omega)-dimethyl-L-arginine + pyruvate = 5-(3,3-dimethylguanidino)-2-oxopentanoate + L-alanine. It catalyses the reaction N(omega),N('omega)-dimethyl-L-arginine + pyruvate = 5-(3,3'-dimethylguanidino)-2-oxopentanoate + L-alanine. The catalysed reaction is N(omega),N(omega)-dimethyl-L-arginine + glyoxylate = 5-(3,3-dimethylguanidino)-2-oxopentanoate + glycine. The enzyme catalyses N(omega),N('omega)-dimethyl-L-arginine + glyoxylate = 5-(3,3'-dimethylguanidino)-2-oxopentanoate + glycine. It carries out the reaction N(omega)-methyl-L-arginine + pyruvate = 5-(3-methylguanidino)-2-oxopentanoate + L-alanine. It catalyses the reaction N(omega)-methyl-L-arginine + glyoxylate = 5-(3-methylguanidino)-2-oxopentanoate + glycine. The catalysed reaction is L-ornithine + pyruvate = 5-amino-2-oxopentanoate + L-alanine. The enzyme catalyses L-ornithine + glyoxylate = 5-amino-2-oxopentanoate + glycine. It carries out the reaction (2S)-2-aminobutanoate + glyoxylate = 2-oxobutanoate + glycine. It catalyses the reaction N(omega),N(omega)-dimethyl-L-arginine + oxaloacetate = 5-(3,3-dimethylguanidino)-2-oxopentanoate + L-aspartate. The catalysed reaction is oxaloacetate + L-alanine = L-aspartate + pyruvate. The enzyme catalyses N(omega),N(omega)-dimethyl-L-arginine + 2-oxobutanoate = 5-(3,3-dimethylguanidino)-2-oxopentanoate + (2S)-2-aminobutanoate. It carries out the reaction 2-oxopentanoate + N(omega),N(omega)-dimethyl-L-arginine = 5-(3,3-dimethylguanidino)-2-oxopentanoate + L-2-aminopentanoate. It catalyses the reaction 2-oxohexanoate + N(omega),N(omega)-dimethyl-L-arginine = L-2-aminohexanoate + 5-(3,3-dimethylguanidino)-2-oxopentanoate. With respect to regulation, (R)-3-amino-2-methylpropionate--pyruvate transaminase and beta-alanine-pyruvate aminotransferase are inhibited by aminooxyacetic acid. Its function is as follows. Multifunctional aminotransferase with a broad substrate specificity. Catalyzes the conversion of glyoxylate to glycine using alanine as the amino donor. Catalyzes metabolism of not L- but the D-isomer of D-beta-aminoisobutyric acid to generate 2-methyl-3-oxopropanoate and alanine. Catalyzes the transfer of the amino group from beta-alanine to pyruvate to yield L-alanine and 3-oxopropanoate. Can metabolize NG-monomethyl-L-arginine (NMMA), asymmetric NG,NG-dimethyl-L-arginine (ADMA) and symmetric NG,N'G-dimethyl-L-arginine (SDMA). ADMA is a potent inhibitor of nitric-oxide (NO) synthase, and this activity provides mechanism through which the kidney regulates blood pressure. The chain is Alanine--glyoxylate aminotransferase 2, mitochondrial (Agxt2) from Mus musculus (Mouse).